The following is a 268-amino-acid chain: uncharacterized protein (268 aa).

It to M.tuberculosis Rv0025 and Rv0026.

This is an uncharacterized protein from Mycobacterium tuberculosis (strain CDC 1551 / Oshkosh).